The following is a 307-amino-acid chain: Acetaldehyde dehydrogenase (307 aa).

12–15 (SGNI) is an NAD(+) binding site. The Acyl-thioester intermediate role is filled by C130. NAD(+)-binding positions include 161 to 169 (SVGPGTRQN) and N272.

It belongs to the acetaldehyde dehydrogenase family.

It catalyses the reaction acetaldehyde + NAD(+) + CoA = acetyl-CoA + NADH + H(+). The polypeptide is Acetaldehyde dehydrogenase (Shewanella halifaxensis (strain HAW-EB4)).